The primary structure comprises 181 residues: NAD(P)H-quinone oxidoreductase subunit I, chloroplastic (181 aa).

4Fe-4S ferredoxin-type domains are found at residues 52–81 (GRIH…VDWE) and 92–121 (KSYS…MTEE). Cys-61, Cys-64, Cys-67, Cys-71, Cys-101, Cys-104, Cys-107, and Cys-111 together coordinate [4Fe-4S] cluster.

The protein belongs to the complex I 23 kDa subunit family. NDH is composed of at least 16 different subunits, 5 of which are encoded in the nucleus. It depends on [4Fe-4S] cluster as a cofactor.

It localises to the plastid. It is found in the chloroplast thylakoid membrane. It catalyses the reaction a plastoquinone + NADH + (n+1) H(+)(in) = a plastoquinol + NAD(+) + n H(+)(out). The enzyme catalyses a plastoquinone + NADPH + (n+1) H(+)(in) = a plastoquinol + NADP(+) + n H(+)(out). In terms of biological role, NDH shuttles electrons from NAD(P)H:plastoquinone, via FMN and iron-sulfur (Fe-S) centers, to quinones in the photosynthetic chain and possibly in a chloroplast respiratory chain. The immediate electron acceptor for the enzyme in this species is believed to be plastoquinone. Couples the redox reaction to proton translocation, and thus conserves the redox energy in a proton gradient. The sequence is that of NAD(P)H-quinone oxidoreductase subunit I, chloroplastic from Staurastrum punctulatum (Green alga).